A 201-amino-acid chain; its full sequence is Holliday junction resolvase RecU (201 aa).

4 residues coordinate Mg(2+): Thr85, Asp87, Glu100, and Gln119.

This sequence belongs to the RecU family. It depends on Mg(2+) as a cofactor.

It is found in the cytoplasm. The catalysed reaction is Endonucleolytic cleavage at a junction such as a reciprocal single-stranded crossover between two homologous DNA duplexes (Holliday junction).. Endonuclease that resolves Holliday junction intermediates in genetic recombination. Cleaves mobile four-strand junctions by introducing symmetrical nicks in paired strands. Promotes annealing of linear ssDNA with homologous dsDNA. Required for DNA repair, homologous recombination and chromosome segregation. The polypeptide is Holliday junction resolvase RecU (Geobacillus thermodenitrificans (strain NG80-2)).